The following is a 323-amino-acid chain: Trihelix transcription factor GT-3a (323 aa).

Residues 1–20 are compositionally biased toward basic residues; it reads MDRRNPFQHHHHHHQLHHHL. The disordered stretch occupies residues 1–51; it reads MDRRNPFQHHHHHHQLHHHLIQQQQLPPPPLSTTATMDPGGGGGGGERIPQ. One can recognise a Myb-like domain in the interval 52–108; the sequence is WSIEETKELLAIREELDQTFMETKRNKLLWEVVAAKMADKGFVRSAEQCKSKWKNLV. 3 disordered regions span residues 147–176, 190–220, and 269–297; these read EATE…EPNQ, KRET…GTKA, and ELEE…ARAQ. The segment covering 164–176 has biased composition (acidic residues); that stretch reads SDDEEEEVDEPNQ.

Homodimer. Heterodimer with GT-3B. Predominantly expressed in roots and flower buds.

The protein localises to the nucleus. Functionally, probable transcription factor that binds specifically to the core DNA sequence 5'-GTTAC-3'. The sequence is that of Trihelix transcription factor GT-3a (GT-3A) from Arabidopsis thaliana (Mouse-ear cress).